Here is a 207-residue protein sequence, read N- to C-terminus: Large ribosomal subunit protein uL4 (207 aa).

A disordered region spans residues 47–78 (GTAKTKTRAEVRGGGKKPWRQKGTGRARQGSI). Positions 60–71 (GGKKPWRQKGTG) are enriched in basic residues.

It belongs to the universal ribosomal protein uL4 family. As to quaternary structure, part of the 50S ribosomal subunit.

In terms of biological role, one of the primary rRNA binding proteins, this protein initially binds near the 5'-end of the 23S rRNA. It is important during the early stages of 50S assembly. It makes multiple contacts with different domains of the 23S rRNA in the assembled 50S subunit and ribosome. Forms part of the polypeptide exit tunnel. The sequence is that of Large ribosomal subunit protein uL4 from Acholeplasma laidlawii (strain PG-8A).